Consider the following 137-residue polypeptide: Nucleoside diphosphate kinase (137 aa).

Positions 10, 58, 86, 92, 103, and 113 each coordinate ATP. The Pros-phosphohistidine intermediate role is filled by H116.

The protein belongs to the NDK family. As to quaternary structure, homotetramer. Requires Mg(2+) as cofactor.

The protein localises to the cytoplasm. The catalysed reaction is a 2'-deoxyribonucleoside 5'-diphosphate + ATP = a 2'-deoxyribonucleoside 5'-triphosphate + ADP. It carries out the reaction a ribonucleoside 5'-diphosphate + ATP = a ribonucleoside 5'-triphosphate + ADP. Functionally, major role in the synthesis of nucleoside triphosphates other than ATP. The ATP gamma phosphate is transferred to the NDP beta phosphate via a ping-pong mechanism, using a phosphorylated active-site intermediate. This is Nucleoside diphosphate kinase from Helicobacter pylori (strain ATCC 700392 / 26695) (Campylobacter pylori).